A 521-amino-acid chain; its full sequence is Ribonuclease Y (521 aa).

Residues 1 to 21 (MFFIEHPFVYLGLDLIVGCLI) traverse the membrane as a helical segment. The KH domain maps to 211 to 271 (TVSMVPLPSD…VRREVARLAL (61 aa)). Residues 337–430 (VLQHSLEVAF…VQAADALSGA (94 aa)) enclose the HD domain.

The protein belongs to the RNase Y family.

The protein localises to the cell membrane. In terms of biological role, endoribonuclease that initiates mRNA decay. This Desulfotalea psychrophila (strain LSv54 / DSM 12343) protein is Ribonuclease Y.